The chain runs to 642 residues: Threonine--tRNA ligase (642 aa).

Residues 1–61 (MPVITLPDGS…HEDASLSIIT (61 aa)) form the TGS domain. The tract at residues 243–534 (DHRKIGKQLD…LIEEYAGRFP (292 aa)) is catalytic. Positions 334, 385, and 511 each coordinate Zn(2+).

This sequence belongs to the class-II aminoacyl-tRNA synthetase family. In terms of assembly, homodimer. Requires Zn(2+) as cofactor.

It is found in the cytoplasm. It carries out the reaction tRNA(Thr) + L-threonine + ATP = L-threonyl-tRNA(Thr) + AMP + diphosphate + H(+). Catalyzes the attachment of threonine to tRNA(Thr) in a two-step reaction: L-threonine is first activated by ATP to form Thr-AMP and then transferred to the acceptor end of tRNA(Thr). Also edits incorrectly charged L-seryl-tRNA(Thr). The protein is Threonine--tRNA ligase of Shewanella amazonensis (strain ATCC BAA-1098 / SB2B).